The sequence spans 426 residues: Mitochondrial distribution and morphology protein 12 (426 aa).

Positions 1 to 426 constitute an SMP-LTD domain; the sequence is MSIEVDWKTA…VFPSFWTFLI (426 aa). Disordered stretches follow at residues 88–147, 185–264, and 346–370; these read AHGN…GTPG, WTDH…FRFP, and ADDQETRDKDDHPRSGLDPTTSPKR. Residues 96–109 show a composition bias toward basic and acidic residues; that stretch reads THSELNEPPYRDEV. Low complexity predominate over residues 216–236; sequence SSNPTSRPSTSSTLPSHPSGS. Basic and acidic residues-rich tracts occupy residues 244–264 and 349–360; these read SHPEEEHLDDPAEPDHPFRFP and QETRDKDDHPRS.

It belongs to the MDM12 family. As to quaternary structure, component of the ER-mitochondria encounter structure (ERMES) or MDM complex, composed of mmm1, mdm10, mdm12 and mdm34. A mmm1 homodimer associates with one molecule of mdm12 on each side in a pairwise head-to-tail manner, and the SMP-LTD domains of mmm1 and mdm12 generate a continuous hydrophobic tunnel for phospholipid trafficking.

It localises to the mitochondrion outer membrane. The protein localises to the endoplasmic reticulum membrane. Its function is as follows. Component of the ERMES/MDM complex, which serves as a molecular tether to connect the endoplasmic reticulum (ER) and mitochondria. Components of this complex are involved in the control of mitochondrial shape and protein biogenesis, and function in nonvesicular lipid trafficking between the ER and mitochondria. Mdm12 is required for the interaction of the ER-resident membrane protein mmm1 and the outer mitochondrial membrane-resident beta-barrel protein mdm10. The mdm12-mmm1 subcomplex functions in the major beta-barrel assembly pathway that is responsible for biogenesis of all mitochondrial outer membrane beta-barrel proteins, and acts in a late step after the SAM complex. The mdm10-mdm12-mmm1 subcomplex further acts in the TOM40-specific pathway after the action of the mdm12-mmm1 complex. Essential for establishing and maintaining the structure of mitochondria and maintenance of mtDNA nucleoids. This chain is Mitochondrial distribution and morphology protein 12, found in Aspergillus terreus (strain NIH 2624 / FGSC A1156).